The chain runs to 216 residues: Inner membrane assembly complex subunit 22 (216 aa).

The N-terminal 26 residues, 1–26, are a transit peptide targeting the mitochondrion; it reads MFMARQVLRNGLFLRSLAPIKITART. The Mitochondrial matrix segment spans residues 27–43; sequence VASANAGIKRKSRFDKT. A helical transmembrane segment spans residues 44–63; the sequence is MIKPLLLVMIFGSILNAVIA. Residues 64 to 93 are a coiled coil; that stretch reads EKRNIIDMERKYKLKLDKLKELIRRVHDNN. Residues 64 to 216 are Mitochondrial intermembrane-facing; that stretch reads EKRNIIDMER…KEHDKIPKFL (153 aa).

Component of the inner membrane assembly (INA) complex, composed of INA17 and INA22. Interacts with a subset of F(1)F(0)-ATP synthase subunits of the F(1)-domain and the peripheral stalk.

The protein resides in the mitochondrion inner membrane. Functionally, component of the INA complex (INAC) that promotes the biogenesis of mitochondrial F(1)F(0)-ATP synthase. INAC facilitates the assembly of the peripheral stalk and promotes the assembly of the catalytic F(1)-domain with the membrane-embedded F(0)-domain. This is Inner membrane assembly complex subunit 22 from Saccharomyces cerevisiae (strain ATCC 204508 / S288c) (Baker's yeast).